A 362-amino-acid polypeptide reads, in one-letter code: Methylthioribose-1-phosphate isomerase (362 aa).

Residues R53 to A55, R90, and Q201 contribute to the substrate site. D242 functions as the Proton donor in the catalytic mechanism. N252 to K253 is a binding site for substrate.

The protein belongs to the eIF-2B alpha/beta/delta subunits family. MtnA subfamily.

It catalyses the reaction 5-(methylsulfanyl)-alpha-D-ribose 1-phosphate = 5-(methylsulfanyl)-D-ribulose 1-phosphate. It participates in amino-acid biosynthesis; L-methionine biosynthesis via salvage pathway; L-methionine from S-methyl-5-thio-alpha-D-ribose 1-phosphate: step 1/6. Catalyzes the interconversion of methylthioribose-1-phosphate (MTR-1-P) into methylthioribulose-1-phosphate (MTRu-1-P). This Paramagnetospirillum magneticum (strain ATCC 700264 / AMB-1) (Magnetospirillum magneticum) protein is Methylthioribose-1-phosphate isomerase.